The sequence spans 241 residues: Antimicrobial ginkbilobin-2-like protein (241 aa).

A signal peptide spans 1–23; it reads MLSSKYISVSFLLLSLSLHAVNC. Gnk2-homologous domains lie at 25-127 and 133-238; these read DPLY…NIDF and NKNK…LYPF. 4 cysteine pairs are disulfide-bonded: C81–C90, C93–C118, C192–C201, and C204–C229. N-linked (GlcNAc...) asparagine glycosylation occurs at N89.

Belongs to the cysteine-rich repeat secretory protein family.

Its subcellular location is the secreted. Functionally, possesses antimicrobial activity toward the oomycete Phytophthora cinnamomi (ink disease agent), thus reducing its growth rate and confering an increased resistance to the plant. This is Antimicrobial ginkbilobin-2-like protein from Castanea crenata (Japanese chestnut).